We begin with the raw amino-acid sequence, 366 residues long: Galactoside alpha-(1,2)-fucosyltransferase 1 (366 aa).

Over 1-8 the chain is Cytoplasmic; it reads MWPPSHRQ. Residues 9-25 traverse the membrane as a helical; Signal-anchor for type II membrane protein segment; that stretch reads LCLAFLLVCVLSVISFF. Residues 26-366 lie on the Lumenal side of the membrane; it reads LHIHQDSFPH…LSSLWTLAKP (341 aa). 3 N-linked (GlcNAc...) asparagine glycosylation sites follow: N66, N302, and N328.

It belongs to the glycosyltransferase 11 family.

It is found in the golgi apparatus. It localises to the golgi stack membrane. It carries out the reaction a beta-D-galactosyl-(1-&gt;4)-N-acetyl-beta-D-glucosaminyl derivative + GDP-beta-L-fucose = an alpha-L-Fuc-(1-&gt;2)-beta-D-Gal-(1-&gt;4)-beta-D-GlcNAc derivative + GDP + H(+). The enzyme catalyses a ganglioside GA1 + GDP-beta-L-fucose = a ganglioside Fuc-GA1 + GDP + H(+). It catalyses the reaction a beta-D-Gal-(1-&gt;3)-beta-D-GlcNAc-(1-&gt;3)-beta-D-Gal-(1-&gt;4)-beta-D-Glc-(1&lt;-&gt;1')-Cer(d18:1(4E)) + GDP-beta-L-fucose = alpha-L-fucosyl-(1-&gt;2)- beta-D-galactosyl-(1-&gt;3)-N-acetyl-beta-D-glucosaminyl-(1-&gt;3)-beta-D-galactosyl-(1-&gt;4)-beta-D-glucosyl-(1&lt;-&gt;1')-N-acylsphing-4-enine + GDP + H(+). The catalysed reaction is a neolactoside nLc4Cer(d18:1(4E)) + GDP-beta-L-fucose = a neolactoside IV(2)-alpha-Fuc-nLc4Cer(d18:1(4E)) + GDP + H(+). It carries out the reaction a ganglioside GM1 + GDP-beta-L-fucose = a ganglioside Fuc-GM1 + GDP + H(+). The enzyme catalyses beta-D-galactosyl-(1-&gt;3)-N-acetyl-D-galactosamine + GDP-beta-L-fucose = alpha-L-fucosyl-(1-&gt;2)-beta-D-galactosyl-(1-&gt;3)-N-acetyl-D-galactosamine + GDP + H(+). Its pathway is protein modification; protein glycosylation. Catalyzes the transfer of L-fucose, from a guanosine diphosphate-beta-L-fucose, to the terminal galactose residue of glycoconjugates through an alpha(1,2) linkage leading to H antigen synthesis that is an intermediate substrate in the synthesis of ABO blood group antigens. H antigen is essential for maturation of the glomerular layer of the main olfactory bulb, in cell migration and early cell-cell contacts during tumor associated angiogenesis. Preferentially fucosylates soluble lactose and to a lesser extent fucosylates glycolipids gangliosides GA1 and GM1a. The chain is Galactoside alpha-(1,2)-fucosyltransferase 1 from Pan troglodytes (Chimpanzee).